We begin with the raw amino-acid sequence, 208 residues long: Protein-L-isoaspartate O-methyltransferase (208 aa).

Ser-59 is an active-site residue.

It belongs to the methyltransferase superfamily. L-isoaspartyl/D-aspartyl protein methyltransferase family.

The protein resides in the cytoplasm. It carries out the reaction [protein]-L-isoaspartate + S-adenosyl-L-methionine = [protein]-L-isoaspartate alpha-methyl ester + S-adenosyl-L-homocysteine. Functionally, catalyzes the methyl esterification of L-isoaspartyl residues in peptides and proteins that result from spontaneous decomposition of normal L-aspartyl and L-asparaginyl residues. It plays a role in the repair and/or degradation of damaged proteins. This chain is Protein-L-isoaspartate O-methyltransferase, found in Erwinia tasmaniensis (strain DSM 17950 / CFBP 7177 / CIP 109463 / NCPPB 4357 / Et1/99).